The chain runs to 307 residues: Methionyl-tRNA formyltransferase (307 aa).

108–111 (SLLP) contributes to the (6S)-5,6,7,8-tetrahydrofolate binding site.

The protein belongs to the Fmt family.

The enzyme catalyses L-methionyl-tRNA(fMet) + (6R)-10-formyltetrahydrofolate = N-formyl-L-methionyl-tRNA(fMet) + (6S)-5,6,7,8-tetrahydrofolate + H(+). Functionally, attaches a formyl group to the free amino group of methionyl-tRNA(fMet). The formyl group appears to play a dual role in the initiator identity of N-formylmethionyl-tRNA by promoting its recognition by IF2 and preventing the misappropriation of this tRNA by the elongation apparatus. The sequence is that of Methionyl-tRNA formyltransferase from Xanthomonas euvesicatoria pv. vesicatoria (strain 85-10) (Xanthomonas campestris pv. vesicatoria).